The following is a 136-amino-acid chain: Cell division protein SepF 3 (136 aa).

This sequence belongs to the SepF family. As to quaternary structure, homodimer. Interacts with FtsZ.

It is found in the cytoplasm. In terms of biological role, cell division protein that is part of the divisome complex and is recruited early to the Z-ring. Probably stimulates Z-ring formation, perhaps through the cross-linking of FtsZ protofilaments. Its function overlaps with FtsA. The protein is Cell division protein SepF 3 of Streptomyces coelicolor (strain ATCC BAA-471 / A3(2) / M145).